A 482-amino-acid polypeptide reads, in one-letter code: tRNA sulfurtransferase (482 aa).

Residues 61-165 (LAIRDALTRI…DDRLLLIKGR (105 aa)) enclose the THUMP domain. ATP contacts are provided by residues 183 to 184 (LI), lysine 265, glycine 287, and glutamine 296. Cysteine 344 and cysteine 456 are joined by a disulfide. The Rhodanese domain maps to 404–482 (FGPNDVILDI…GFENVKAYRP (79 aa)). The active-site Cysteine persulfide intermediate is the cysteine 456.

Belongs to the ThiI family.

It is found in the cytoplasm. It catalyses the reaction [ThiI sulfur-carrier protein]-S-sulfanyl-L-cysteine + a uridine in tRNA + 2 reduced [2Fe-2S]-[ferredoxin] + ATP + H(+) = [ThiI sulfur-carrier protein]-L-cysteine + a 4-thiouridine in tRNA + 2 oxidized [2Fe-2S]-[ferredoxin] + AMP + diphosphate. It carries out the reaction [ThiS sulfur-carrier protein]-C-terminal Gly-Gly-AMP + S-sulfanyl-L-cysteinyl-[cysteine desulfurase] + AH2 = [ThiS sulfur-carrier protein]-C-terminal-Gly-aminoethanethioate + L-cysteinyl-[cysteine desulfurase] + A + AMP + 2 H(+). The protein operates within cofactor biosynthesis; thiamine diphosphate biosynthesis. Catalyzes the ATP-dependent transfer of a sulfur to tRNA to produce 4-thiouridine in position 8 of tRNAs, which functions as a near-UV photosensor. Also catalyzes the transfer of sulfur to the sulfur carrier protein ThiS, forming ThiS-thiocarboxylate. This is a step in the synthesis of thiazole, in the thiamine biosynthesis pathway. The sulfur is donated as persulfide by IscS. The protein is tRNA sulfurtransferase of Salmonella gallinarum (strain 287/91 / NCTC 13346).